Here is a 438-residue protein sequence, read N- to C-terminus: Adenosylhomocysteinase (438 aa).

3 residues coordinate substrate: threonine 64, aspartate 139, and glutamate 164. NAD(+) is bound at residue 165-167 (TTT). Substrate contacts are provided by lysine 194 and aspartate 198. NAD(+) is bound by residues asparagine 199, 228 to 233 (GYGDVG), glutamate 251, asparagine 286, 307 to 309 (IGH), and asparagine 352.

The protein belongs to the adenosylhomocysteinase family. NAD(+) is required as a cofactor.

It is found in the cytoplasm. It catalyses the reaction S-adenosyl-L-homocysteine + H2O = L-homocysteine + adenosine. It functions in the pathway amino-acid biosynthesis; L-homocysteine biosynthesis; L-homocysteine from S-adenosyl-L-homocysteine: step 1/1. In terms of biological role, may play a key role in the regulation of the intracellular concentration of adenosylhomocysteine. The chain is Adenosylhomocysteinase from Coxiella burnetii (strain RSA 493 / Nine Mile phase I).